The chain runs to 41 residues: Large ribosomal subunit protein bL36 (41 aa).

Belongs to the bacterial ribosomal protein bL36 family.

In Ruegeria sp. (strain TM1040) (Silicibacter sp.), this protein is Large ribosomal subunit protein bL36.